A 401-amino-acid chain; its full sequence is Probable thioesterase FGSG_00047 (401 aa).

The tract at residues 379-401 (AREMDQRKRQKDFTHTTIHDKNS) is disordered.

It belongs to the AMT4 thioesterase family.

Its pathway is mycotoxin biosynthesis. In terms of biological role, probable thioesterase; part of the gene cluster that mediates the biosynthesis of gramillins A and B, bicyclic lipopeptides that induce cell death in maize leaves but not in wheat leaves. The nonribosomal peptide synthetase GRA1 incorporates respectively a glutamic adic (Glu), a leucine (Leu), a serine (Ser), a hydroxyglutamine (HOGln), a 2-amino decanoic acid, and 2 cysteins (CysB and CysA). The biosynthesis of 2-amino decanoic acid incorporated in gramillins could be initiated by a fatty acid synthase composed of the alpha and beta subunits FGSG_00036 and FGSG_11656. The cytochrome P450 monooxygenase FGSG_15680 could hydroxylate the fatty acid chain. Subsequent oxidation to the ketone by the oxidoreductase FGSG_00048 and transamination by aminotransferase FGSG_00049 could form 2-amino-decanoic acid. On the other hand, FGSG_15680 could also be responsible for the HO-modified glutamine at the gamma-position. Whether hydroxylation occurs on the fully assembled product or on the Gln residue prior to assembly into the gramillins requires further proof. The thioredoxin FGSG_00043 could also be required for the disulfide-bond formation between CysA and CysB. The specific involvement of the remaining proteins from the cluster is more difficult to discern, but could have broader regulatory (FGSG_00040 and FGSG_11657) or enzymatic functions (FGSG_00044 and FGSG_00045). The final C-domain of GRA1 does not possess the expected sequence of a termination CT domain, often implicated in macrocyclization and release of a cyclopeptidein fungal NRPs; and the thioesterase FGSG_00047 may act in concert with the terminal C-domain of GRA1 to catalyze the formation of the macrocyclic anhydride and release of the products. The sequence is that of Probable thioesterase FGSG_00047 from Gibberella zeae (strain ATCC MYA-4620 / CBS 123657 / FGSC 9075 / NRRL 31084 / PH-1) (Wheat head blight fungus).